A 171-amino-acid polypeptide reads, in one-letter code: Co-chaperone protein HscB homolog (171 aa).

One can recognise a J domain in the interval 2–74 (NHFELFGLPN…VSRAEYILSE (73 aa)).

This sequence belongs to the HscB family. In terms of assembly, interacts with HscA and stimulates its ATPase activity.

Its function is as follows. Co-chaperone involved in the maturation of iron-sulfur cluster-containing proteins. Seems to help targeting proteins to be folded toward HscA. This is Co-chaperone protein HscB homolog from Aliivibrio fischeri (strain ATCC 700601 / ES114) (Vibrio fischeri).